The following is a 58-amino-acid chain: ATP synthase F(0) complex subunit k, mitochondrial (58 aa).

2 positions are modified to N6-acetyllysine; partial: K16 and K17. The helical transmembrane segment at 23–45 threads the bilayer; it reads TLTGRMNCVLATYGSIALIVLYF.

Component of the ATP synthase complex composed at least of ATP5F1A/subunit alpha, ATP5F1B/subunit beta, ATP5MC1/subunit c (homooctomer), MT-ATP6/subunit a, MT-ATP8/subunit 8, ATP5ME/subunit e, ATP5MF/subunit f, ATP5MG/subunit g, ATP5MK/subunit k, ATP5MJ/subunit j, ATP5F1C/subunit gamma, ATP5F1D/subunit delta, ATP5F1E/subunit epsilon, ATP5PF/subunit F6, ATP5PB/subunit b, ATP5PD/subunit d, ATP5PO/subunit OSCP. ATP synthase complex consists of a soluble F(1) head domain (subunits alpha(3) and beta(3)) - the catalytic core - and a membrane F(0) domain - the membrane proton channel (subunits c, a, 8, e, f, g, k and j). These two domains are linked by a central stalk (subunits gamma, delta, and epsilon) rotating inside the F1 region and a stationary peripheral stalk (subunits F6, b, d, and OSCP). The ATP synthase complex/complex V exists as a monomeric and a dimeric supercomplex that helps shape mitochondrial cristae to optimize proton flow.

It localises to the mitochondrion membrane. In terms of biological role, subunit k, of the mitochondrial membrane ATP synthase complex (F(1)F(0) ATP synthase or Complex V) that produces ATP from ADP in the presence of a proton gradient across the membrane which is generated by electron transport complexes of the respiratory chain. ATP synthase complex consist of a soluble F(1) head domain - the catalytic core - and a membrane F(1) domain - the membrane proton channel. These two domains are linked by a central stalk rotating inside the F(1) region and a stationary peripheral stalk. During catalysis, ATP synthesis in the catalytic domain of F(1) is coupled via a rotary mechanism of the central stalk subunits to proton translocation. In vivo, can only synthesize ATP although its ATP hydrolase activity can be activated artificially in vitro. Part of the complex F(0) domain. Required for dimerization of the ATP synthase complex and as such regulates ATP synthesis in the mitochondria. This chain is ATP synthase F(0) complex subunit k, mitochondrial, found in Bos taurus (Bovine).